The primary structure comprises 446 residues: Probable ribosomal RNA small subunit methyltransferase B (446 aa).

S-adenosyl-L-methionine-binding positions include cysteine 260–lysine 266, aspartate 284, aspartate 311, and aspartate 330. Cysteine 383 acts as the Nucleophile in catalysis.

It belongs to the class I-like SAM-binding methyltransferase superfamily. RsmB/NOP family.

It localises to the cytoplasm. It catalyses the reaction cytidine(967) in 16S rRNA + S-adenosyl-L-methionine = 5-methylcytidine(967) in 16S rRNA + S-adenosyl-L-homocysteine + H(+). Functionally, specifically methylates the cytosine at position 967 (m5C967) of 16S rRNA. This is Probable ribosomal RNA small subunit methyltransferase B from Synechocystis sp. (strain ATCC 27184 / PCC 6803 / Kazusa).